Here is a 305-residue protein sequence, read N- to C-terminus: Protoheme IX farnesyltransferase 2 (305 aa).

8 consecutive transmembrane segments (helical) span residues 38–58 (LITTFTGMWLALHISGLSFLG), 60–80 (INTVLLTLIGSSLIIAGSCAI), 115–135 (ILLVALGLIMLLMTTVMAAVI), 157–177 (INTVVGSVSGAVPPLIGWTAV), 181–201 (IGVVAWVLFMILFIWQIPHFL), 227–247 (VTKRQIIVWVACLMPLPFFLG), 249–269 (LGLPIVILGLLLNIGWLILGL), and 285–305 (FVYSLNYMTIYFVAMVVLTLF).

This sequence belongs to the UbiA prenyltransferase family. Protoheme IX farnesyltransferase subfamily. Interacts with CtaA.

Its subcellular location is the cell membrane. It carries out the reaction heme b + (2E,6E)-farnesyl diphosphate + H2O = Fe(II)-heme o + diphosphate. It functions in the pathway porphyrin-containing compound metabolism; heme O biosynthesis; heme O from protoheme: step 1/1. Functionally, converts heme B (protoheme IX) to heme O by substitution of the vinyl group on carbon 2 of heme B porphyrin ring with a hydroxyethyl farnesyl side group. The chain is Protoheme IX farnesyltransferase 2 (ctaB2) from Bacillus subtilis (strain 168).